A 299-amino-acid chain; its full sequence is Hydrogenase maturation factor HypB (299 aa).

Residues Cys-2, Cys-5, and Cys-7 each contribute to the Ni(2+) site. Residues 18–57 are disordered; that stretch reads EVGDDGHGHHHHDGHHDHDHDHDHHRGDHEHDDHHHAEDG. Over residues 31–57 the composition is skewed to basic and acidic residues; it reads GHHDHDHDHDHHRGDHEHDDHHHAEDG. A G-domain region spans residues 107–268; the sequence is ALNFVSSPGS…LRVNPRLQTL (162 aa). Ni(2+) contacts are provided by Cys-167, His-168, and Cys-199. Residues Cys-167, His-168, and Cys-199 each contribute to the Zn(2+) site.

The protein belongs to the SIMIBI class G3E GTPase family. HypB/HupM subfamily.

Involved in the maturation of [NiFe] hydrogenases. Required for nickel insertion into the metal center of the hydrogenase. Exhibits a low intrinsic GTPase activity, which is essential for nickel insertion. Is able to bind 4 nickel ions per subunit. Can also bind zinc. This is Hydrogenase maturation factor HypB from Rhizobium leguminosarum bv. viciae.